Consider the following 58-residue polypeptide: Small ribosomal subunit protein bS21A (58 aa).

The disordered stretch occupies residues 38–58 (YEKPSLRRKRKAEAARKGGRN). The span at 49–58 (AEAARKGGRN) shows a compositional bias: basic and acidic residues.

It belongs to the bacterial ribosomal protein bS21 family.

The chain is Small ribosomal subunit protein bS21A from Trichormus variabilis (strain ATCC 29413 / PCC 7937) (Anabaena variabilis).